The primary structure comprises 62 residues: uncharacterized protein (62 aa).

It is found in the plastid. It localises to the chloroplast. This is an uncharacterized protein from Chlamydomonas reinhardtii (Chlamydomonas smithii).